Consider the following 69-residue polypeptide: Probable Sec-independent protein translocase protein TatE (69 aa).

A helical membrane pass occupies residues methionine 1–glycine 21. Positions aspartate 45–glutamate 69 are disordered. Residues alanine 54–glutamate 69 are compositionally biased toward basic and acidic residues.

It belongs to the TatA/E family. TatE subfamily.

It localises to the cell inner membrane. In terms of biological role, part of the twin-arginine translocation (Tat) system that transports large folded proteins containing a characteristic twin-arginine motif in their signal peptide across membranes. TatE shares overlapping functions with TatA. The chain is Probable Sec-independent protein translocase protein TatE from Dickeya chrysanthemi (strain Ech1591) (Dickeya zeae (strain Ech1591)).